A 312-amino-acid polypeptide reads, in one-letter code: Malate dehydrogenase (312 aa).

NAD(+)-binding positions include 7–13 (GAAGGIG) and Asp-34. 2 residues coordinate substrate: Arg-81 and Arg-87. NAD(+)-binding positions include Asn-94 and 117 to 119 (ITN). Asn-119 and Arg-153 together coordinate substrate. The active-site Proton acceptor is the His-177. NAD(+) is bound at residue Met-227.

The protein belongs to the LDH/MDH superfamily. MDH type 1 family. Homodimer.

The enzyme catalyses (S)-malate + NAD(+) = oxaloacetate + NADH + H(+). Its function is as follows. Catalyzes the reversible oxidation of malate to oxaloacetate. This is Malate dehydrogenase from Cronobacter sakazakii (strain ATCC BAA-894) (Enterobacter sakazakii).